We begin with the raw amino-acid sequence, 120 residues long: Large ribosomal subunit protein uL22 (120 aa).

Belongs to the universal ribosomal protein uL22 family. In terms of assembly, part of the 50S ribosomal subunit.

This protein binds specifically to 23S rRNA; its binding is stimulated by other ribosomal proteins, e.g. L4, L17, and L20. It is important during the early stages of 50S assembly. It makes multiple contacts with different domains of the 23S rRNA in the assembled 50S subunit and ribosome. In terms of biological role, the globular domain of the protein is located near the polypeptide exit tunnel on the outside of the subunit, while an extended beta-hairpin is found that lines the wall of the exit tunnel in the center of the 70S ribosome. This Rippkaea orientalis (strain PCC 8801 / RF-1) (Cyanothece sp. (strain PCC 8801)) protein is Large ribosomal subunit protein uL22.